The following is a 158-amino-acid chain: Crossover junction endodeoxyribonuclease RuvC (158 aa).

Catalysis depends on residues aspartate 7, glutamate 66, and aspartate 139. The Mg(2+) site is built by aspartate 7, glutamate 66, and aspartate 139.

It belongs to the RuvC family. Homodimer which binds Holliday junction (HJ) DNA. The HJ becomes 2-fold symmetrical on binding to RuvC with unstacked arms; it has a different conformation from HJ DNA in complex with RuvA. In the full resolvosome a probable DNA-RuvA(4)-RuvB(12)-RuvC(2) complex forms which resolves the HJ. It depends on Mg(2+) as a cofactor.

The protein localises to the cytoplasm. It carries out the reaction Endonucleolytic cleavage at a junction such as a reciprocal single-stranded crossover between two homologous DNA duplexes (Holliday junction).. Its function is as follows. The RuvA-RuvB-RuvC complex processes Holliday junction (HJ) DNA during genetic recombination and DNA repair. Endonuclease that resolves HJ intermediates. Cleaves cruciform DNA by making single-stranded nicks across the HJ at symmetrical positions within the homologous arms, yielding a 5'-phosphate and a 3'-hydroxyl group; requires a central core of homology in the junction. The consensus cleavage sequence is 5'-(A/T)TT(C/G)-3'. Cleavage occurs on the 3'-side of the TT dinucleotide at the point of strand exchange. HJ branch migration catalyzed by RuvA-RuvB allows RuvC to scan DNA until it finds its consensus sequence, where it cleaves and resolves the cruciform DNA. The sequence is that of Crossover junction endodeoxyribonuclease RuvC from Campylobacter hominis (strain ATCC BAA-381 / DSM 21671 / CCUG 45161 / LMG 19568 / NCTC 13146 / CH001A).